The following is a 250-amino-acid chain: 26 kDa periplasmic immunogenic protein (250 aa).

Positions 1–28 are cleaved as a signal peptide; sequence MNTRASNFLAASFSTIMLVGAFSLPAFA.

The protein resides in the periplasm. The protein is 26 kDa periplasmic immunogenic protein (bp26) of Brucella melitensis biotype 1 (strain ATCC 23456 / CCUG 17765 / NCTC 10094 / 16M).